The primary structure comprises 496 residues: NAD(P)H-quinone oxidoreductase subunit 2 A, chloroplastic (496 aa).

Transmembrane regions (helical) follow at residues 13 to 33 (SILP…IDLL), 41 to 61 (TFWS…ILLL), 83 to 103 (IFRF…VDYI), 110 to 130 (VTEF…LCGA), 133 to 153 (LISI…LSGY), 168 to 188 (LLMG…PYGL), 213 to 233 (VSIA…LVPF), 245 to 265 (PTPV…ALAT), 279 to 299 (WHLP…LIAV), 307 to 327 (MLAY…IAGD), 338 to 358 (YMLI…SFGL), 380 to 400 (LSLV…GFFG), 413 to 435 (LYFL…SRII), and 470 to 490 (MILC…IIAI).

The protein belongs to the complex I subunit 2 family. In terms of assembly, NDH is composed of at least 16 different subunits, 5 of which are encoded in the nucleus.

It is found in the plastid. The protein resides in the chloroplast thylakoid membrane. It catalyses the reaction a plastoquinone + NADH + (n+1) H(+)(in) = a plastoquinol + NAD(+) + n H(+)(out). It carries out the reaction a plastoquinone + NADPH + (n+1) H(+)(in) = a plastoquinol + NADP(+) + n H(+)(out). Functionally, NDH shuttles electrons from NAD(P)H:plastoquinone, via FMN and iron-sulfur (Fe-S) centers, to quinones in the photosynthetic chain and possibly in a chloroplast respiratory chain. The immediate electron acceptor for the enzyme in this species is believed to be plastoquinone. Couples the redox reaction to proton translocation, and thus conserves the redox energy in a proton gradient. This chain is NAD(P)H-quinone oxidoreductase subunit 2 A, chloroplastic, found in Psilotum nudum (Whisk fern).